The chain runs to 405 residues: Argininosuccinate synthase (405 aa).

ATP contacts are provided by residues 10-18 (AYSGGLDTS) and A37. Residues Y88 and S93 each contribute to the L-citrulline site. G118 is an ATP binding site. Residues T120, N124, and D125 each contribute to the L-aspartate site. Residue N124 participates in L-citrulline binding. 5 residues coordinate L-citrulline: R128, S179, S188, E264, and Y276.

It belongs to the argininosuccinate synthase family. Type 1 subfamily. As to quaternary structure, homotetramer.

It is found in the cytoplasm. It catalyses the reaction L-citrulline + L-aspartate + ATP = 2-(N(omega)-L-arginino)succinate + AMP + diphosphate + H(+). The protein operates within amino-acid biosynthesis; L-arginine biosynthesis; L-arginine from L-ornithine and carbamoyl phosphate: step 2/3. In Pseudomonas syringae pv. syringae (strain B728a), this protein is Argininosuccinate synthase.